Here is a 326-residue protein sequence, read N- to C-terminus: Flavanone 3-dioxygenase 3 (326 aa).

The segment covering 1–15 (MSDTSKGIPQEQLPS) has biased composition (polar residues). The disordered stretch occupies residues 1-21 (MSDTSKGIPQEQLPSQELHPP). Residues 175–276 (EGLQLLSVNC…RISLASIHGF (102 aa)) enclose the Fe2OG dioxygenase domain. Histidine 200, aspartate 202, and histidine 257 together coordinate Fe cation. Arginine 267 provides a ligand contact to 2-oxoglutarate.

The protein belongs to the iron/ascorbate-dependent oxidoreductase family. The cofactor is Fe(2+). L-ascorbate is required as a cofactor. Expressed at very low levels in roots, leaves, stems and seeds.

The catalysed reaction is a (2S)-flavan-4-one + 2-oxoglutarate + O2 = a (2R,3R)-dihydroflavonol + succinate + CO2. Its pathway is secondary metabolite biosynthesis; flavonoid biosynthesis. Catalyzes the 3-beta-hydroxylation of 2S-flavanones to 2R,3R-dihydroflavonols which are intermediates in the biosynthesis of flavonols, anthocyanidins, catechins and proanthocyanidins in plants. Converts (2S)-eriodictyol to (+)-taxifolin and (2S)-naringenin to (+)-(2R/3R)-dihydrokaempferol in vitro. This Oryza sativa subsp. japonica (Rice) protein is Flavanone 3-dioxygenase 3.